Reading from the N-terminus, the 389-residue chain is MVSVAEIRKAQRAEGPATILAIGTANPPNRVEQATYPDFYFKITNSEHKVELKEKFQRMCDKSMIKSRYMYLTEEILKENPSVCEYMAPSLDARQDMVVVEVPRLGKEAAVKAIKEWGQPKSKITHLIFCTTSGVDMPGADYQLTKLLGLRPYVKRYMMYQQGCFAGGTVLRLAKDLAENNKGARVLVVCSEVTAVTFRGPSDTHLDSLVGQALFGDGAAALIVGSDPVPEIEKPIFEMVWTAQTIAPDSEGAIDGHLREAGLTFHLLKDVPGIVSKNIDKALVEAFQPLNISDYNSIFWIAHPGGPAILDQVEQKLSLKPEKMKATRDVLSEYGNMSSACVLFILDEMRKKSAQDGLKTTGEGLEWGVLFGFGPGLTIETVVLHSVAI.

The active site involves Cys-164.

This sequence belongs to the thiolase-like superfamily. Chalcone/stilbene synthases family.

The enzyme catalyses (E)-4-coumaroyl-CoA + 3 malonyl-CoA + 3 H(+) = 2',4,4',6'-tetrahydroxychalcone + 3 CO2 + 4 CoA. It participates in secondary metabolite biosynthesis; flavonoid biosynthesis. In terms of biological role, the primary product of this enzyme is 4,2',4',6'-tetrahydroxychalcone (also termed naringenin-chalcone or chalcone) which can under specific conditions spontaneously isomerize into naringenin. The chain is Chalcone synthase 1 (CHS1) from Trifolium subterraneum (Subterranean clover).